Consider the following 560-residue polypeptide: Flagellar M-ring protein (560 aa).

The chain crosses the membrane as a helical span at residues 26 to 46; the sequence is IPLIVAGSAAVAIVVAMVLWA. The interval 304 to 372 is disordered; the sequence is VGAGYPGGVP…TSNYEVDRTI (69 aa). Residues 331–353 show a composition bias toward low complexity; the sequence is PPTNQQNAQNTPQTSTSTNSNSA. Over residues 354–366 the composition is skewed to polar residues; it reads GPRSTQRNETSNY. Residues 455–475 traverse the membrane as a helical segment; it reads FIDQLLAAGRWLLVLVVAWIL.

This sequence belongs to the FliF family. The basal body constitutes a major portion of the flagellar organelle and consists of four rings (L,P,S, and M) mounted on a central rod. The M ring is integral to the inner membrane of the cell and may be connected to the flagellar rod via the S ring. The S (supramembrane ring) lies just distal to the M ring. The L and P rings lie in the outer membrane and the periplasmic space, respectively.

It is found in the cell inner membrane. Its subcellular location is the bacterial flagellum basal body. In terms of biological role, the M ring may be actively involved in energy transduction. The chain is Flagellar M-ring protein (fliF) from Salmonella typhimurium (strain LT2 / SGSC1412 / ATCC 700720).